Here is a 197-residue protein sequence, read N- to C-terminus: ATP-dependent Clp protease proteolytic subunit 1 (197 aa).

Ser100 functions as the Nucleophile in the catalytic mechanism. His125 is a catalytic residue.

Belongs to the peptidase S14 family. Fourteen ClpP subunits assemble into 2 heptameric rings which stack back to back to give a disk-like structure with a central cavity, resembling the structure of eukaryotic proteasomes.

It localises to the cytoplasm. The catalysed reaction is Hydrolysis of proteins to small peptides in the presence of ATP and magnesium. alpha-casein is the usual test substrate. In the absence of ATP, only oligopeptides shorter than five residues are hydrolyzed (such as succinyl-Leu-Tyr-|-NHMec, and Leu-Tyr-Leu-|-Tyr-Trp, in which cleavage of the -Tyr-|-Leu- and -Tyr-|-Trp bonds also occurs).. Its function is as follows. Cleaves peptides in various proteins in a process that requires ATP hydrolysis. Has a chymotrypsin-like activity. Plays a major role in the degradation of misfolded proteins. This Gloeobacter violaceus (strain ATCC 29082 / PCC 7421) protein is ATP-dependent Clp protease proteolytic subunit 1.